We begin with the raw amino-acid sequence, 423 residues long: Cyclin-B2-1 (423 aa).

The interval methionine 1 to proline 61 is disordered. Residues proline 49–lysine 60 are compositionally biased toward basic and acidic residues.

It belongs to the cyclin family. Cyclin AB subfamily. Interacts with CDKB2-1. Expressed in the intercalary meristem and the elongation zone of internodes. Expressed in adventitious roots at all nodes under submergence conditions.

Its function is as follows. Involved in the control of the cell cycle at the G2/M (mitosis) transition. May activate CDKB2-1 kinase. The chain is Cyclin-B2-1 (CYCB2-1) from Oryza sativa subsp. indica (Rice).